The primary structure comprises 138 residues: Large ribosomal subunit protein mL43 (138 aa).

Belongs to the mitochondrion-specific ribosomal protein mL43 family. In terms of assembly, component of the mitochondrial large ribosomal subunit (mt-LSU). Mature N.crassa 74S mitochondrial ribosomes consist of a small (37S) and a large (54S) subunit. The 37S small subunit contains a 16S ribosomal RNA (16S mt-rRNA) and 32 different proteins. The 54S large subunit contains a 23S rRNA (23S mt-rRNA) and 42 different proteins.

Its subcellular location is the mitochondrion. Component of the mitochondrial ribosome (mitoribosome), a dedicated translation machinery responsible for the synthesis of mitochondrial genome-encoded proteins, including at least some of the essential transmembrane subunits of the mitochondrial respiratory chain. The mitoribosomes are attached to the mitochondrial inner membrane and translation products are cotranslationally integrated into the membrane. The polypeptide is Large ribosomal subunit protein mL43 (mrpl51) (Neurospora crassa (strain ATCC 24698 / 74-OR23-1A / CBS 708.71 / DSM 1257 / FGSC 987)).